A 152-amino-acid chain; its full sequence is Lipoprotein signal peptidase (152 aa).

3 helical membrane passes run 33–53 (VVPPAFYLTYIMNPGAAFGLL), 58–78 (MLFVTVTVIIIAGVLVGYFKI), and 83–102 (PVLDYGLGLVAGGALGNLAD). Active-site residues include aspartate 111 and aspartate 125. The helical transmembrane segment at 120-140 (VFNLADTAIVTGAFLLAWALL) threads the bilayer.

It belongs to the peptidase A8 family.

It is found in the cell membrane. It carries out the reaction Release of signal peptides from bacterial membrane prolipoproteins. Hydrolyzes -Xaa-Yaa-Zaa-|-(S,diacylglyceryl)Cys-, in which Xaa is hydrophobic (preferably Leu), and Yaa (Ala or Ser) and Zaa (Gly or Ala) have small, neutral side chains.. It functions in the pathway protein modification; lipoprotein biosynthesis (signal peptide cleavage). In terms of biological role, this protein specifically catalyzes the removal of signal peptides from prolipoproteins. The chain is Lipoprotein signal peptidase from Pelotomaculum thermopropionicum (strain DSM 13744 / JCM 10971 / SI).